Reading from the N-terminus, the 215-residue chain is Ras-related protein Rab-5A (215 aa).

The GTP site is built by Ser-29, Ala-30, Gly-32, Lys-33, Ser-34, Ser-35, His-46, Glu-47, Thr-52, and Gly-78. Ser-34 provides a ligand contact to Mg(2+). Short sequence motifs (switch) lie at residues 44–56 (QFHE…IGAA) and 77–93 (AGQE…YRGA). Thr-52 is a Mg(2+) binding site. Position 84 is a phosphoserine (Ser-84). Asn-133, Lys-134, Asp-136, Ala-164, and Lys-165 together coordinate GTP. The interval 181-215 (LPKNEPQNPGANSARGRGVDLTEPAQPARSQCCSN) is disordered. Residues Cys-212 and Cys-213 are each lipidated (S-geranylgeranyl cysteine).

This sequence belongs to the small GTPase superfamily. Rab family. In terms of assembly, interacts with GDI1; this promotes dissociation from membranes; phosphorylation at Ser-84 disrupts this interaction. Interacts with GDI2; phosphorylation at Ser-84 disrupts the interaction. Interacts with EEA1. Interacts with RIN1 and GAPVD1, which regulate its pathway, probably by acting as a GEF. Interacts with ALS2CL, SUN2, ZFYVE20 and RUFY1. Interacts with RABEP1; one RABEP1 homodimer binds two RAB5A chains, but at opposite sides of the dimer. Interacts with SGSM1, SGSM3 and PIK3CB. Interacts with RINL. May be a component of a complex composed of RAB5A, DYN2 and PIK3C3. Does not interact with the BLOC-3 complex (heterodimer of HPS1 and HPS4). Interacts with CLN5. Interacts with APPL2. Interacts with F8A1/F8A2/F8A3. Found in a complex with F8A1/F8A2/F8A3, HTT and RAB5A; mediates the recruitment of HTT by RAB5A onto early endosomes. Interacts with ATP9A. Interacts with PPP1R21; mediates the recruitment of FERRY complex by RAB5A onto early endosomes. The cofactor is Mg(2+). Post-translationally, phosphorylation of Ser-84 in the switch II region by LRRK2 prevents the association of RAB regulatory proteins, including RAB GDP dissociation inhibitors GDI1 and GDI2.

Its subcellular location is the cell membrane. The protein localises to the early endosome membrane. The protein resides in the melanosome. It is found in the cytoplasmic vesicle. It localises to the cell projection. Its subcellular location is the ruffle. The protein localises to the membrane. The protein resides in the cytoplasm. It is found in the cytosol. It localises to the phagosome membrane. Its subcellular location is the endosome membrane. The catalysed reaction is GTP + H2O = GDP + phosphate + H(+). Its activity is regulated as follows. Regulated by guanine nucleotide exchange factors (GEFs) including RINL, which promote the exchange of bound GDP for free GTP. Regulated by GTPase activating proteins (GAPs) which increase the GTP hydrolysis activity. Inhibited by GDP dissociation inhibitors (GDIs). The small GTPases Rab are key regulators of intracellular membrane trafficking, from the formation of transport vesicles to their fusion with membranes. Rabs cycle between an inactive GDP-bound form and an active GTP-bound form that is able to recruit to membranes different sets of downstream effectors directly responsible for vesicle formation, movement, tethering and fusion. RAB5A is required for the fusion of plasma membranes and early endosomes. Contributes to the regulation of filopodia extension. Required for the exosomal release of SDCBP, CD63, PDCD6IP and syndecan. Regulates maturation of apoptotic cell-containing phagosomes, probably downstream of DYN2 and PIK3C3. In Rattus norvegicus (Rat), this protein is Ras-related protein Rab-5A.